The sequence spans 441 residues: Trigger factor (441 aa).

In terms of domain architecture, PPIase FKBP-type spans 161–246 (GDMVTVDFQG…VKDVKERILA (86 aa)).

The protein belongs to the FKBP-type PPIase family. Tig subfamily.

Its subcellular location is the cytoplasm. It catalyses the reaction [protein]-peptidylproline (omega=180) = [protein]-peptidylproline (omega=0). In terms of biological role, involved in protein export. Acts as a chaperone by maintaining the newly synthesized protein in an open conformation. Functions as a peptidyl-prolyl cis-trans isomerase. This is Trigger factor from Desulfotalea psychrophila (strain LSv54 / DSM 12343).